A 322-amino-acid chain; its full sequence is Acetylglutamate kinase (322 aa).

Substrate-binding positions include 89–90 (GG), R111, and N217.

It belongs to the acetylglutamate kinase family. ArgB subfamily.

The protein localises to the cytoplasm. It carries out the reaction N-acetyl-L-glutamate + ATP = N-acetyl-L-glutamyl 5-phosphate + ADP. It functions in the pathway amino-acid biosynthesis; L-arginine biosynthesis; N(2)-acetyl-L-ornithine from L-glutamate: step 2/4. Its function is as follows. Catalyzes the ATP-dependent phosphorylation of N-acetyl-L-glutamate. This chain is Acetylglutamate kinase, found in Ehrlichia ruminantium (strain Gardel).